A 176-amino-acid polypeptide reads, in one-letter code: NADH-quinone oxidoreductase subunit I 1 (176 aa).

4Fe-4S ferredoxin-type domains follow at residues Ile45 to Thr77 and Arg87 to Asp116. 8 residues coordinate [4Fe-4S] cluster: Cys57, Cys60, Cys63, Cys67, Cys96, Cys99, Cys102, and Cys106.

This sequence belongs to the complex I 23 kDa subunit family. In terms of assembly, NDH-1 is composed of 14 different subunits. Subunits NuoA, H, J, K, L, M, N constitute the membrane sector of the complex. [4Fe-4S] cluster is required as a cofactor.

The protein localises to the cell inner membrane. The enzyme catalyses a quinone + NADH + 5 H(+)(in) = a quinol + NAD(+) + 4 H(+)(out). In terms of biological role, NDH-1 shuttles electrons from NADH, via FMN and iron-sulfur (Fe-S) centers, to quinones in the respiratory chain. The immediate electron acceptor for the enzyme in this species is believed to be ubiquinone. Couples the redox reaction to proton translocation (for every two electrons transferred, four hydrogen ions are translocated across the cytoplasmic membrane), and thus conserves the redox energy in a proton gradient. This is NADH-quinone oxidoreductase subunit I 1 from Geobacter metallireducens (strain ATCC 53774 / DSM 7210 / GS-15).